A 261-amino-acid chain; its full sequence is Protein unc-50 homolog (261 aa).

Helical transmembrane passes span 37–57 (IFHYPQMDIEYTFWIMFYLCF), 82–102 (AFAVILVFFMAIASMSYAITF), 113–133 (VMFWAVFVDFITVGLLIATIG), 166–186 (SFFPLFIILYVVQFFLLPILL), 190–210 (LFAAILSNTLYIIGFSYYYYV), and 225–245 (VVFLYPIGILFALYIVSVVMG).

The protein belongs to the unc-50 family.

The protein localises to the membrane. This Dictyostelium discoideum (Social amoeba) protein is Protein unc-50 homolog.